The chain runs to 306 residues: tRNA pseudouridine synthase B (306 aa).

Asp-43 (nucleophile) is an active-site residue.

It belongs to the pseudouridine synthase TruB family. Type 1 subfamily.

It catalyses the reaction uridine(55) in tRNA = pseudouridine(55) in tRNA. Responsible for synthesis of pseudouridine from uracil-55 in the psi GC loop of transfer RNAs. This chain is tRNA pseudouridine synthase B, found in Heliobacterium modesticaldum (strain ATCC 51547 / Ice1).